A 122-amino-acid chain; its full sequence is Large ribosomal subunit protein uL14 (122 aa).

Belongs to the universal ribosomal protein uL14 family. Part of the 50S ribosomal subunit. Forms a cluster with proteins L3 and L19. In the 70S ribosome, L14 and L19 interact and together make contacts with the 16S rRNA in bridges B5 and B8.

Its function is as follows. Binds to 23S rRNA. Forms part of two intersubunit bridges in the 70S ribosome. The polypeptide is Large ribosomal subunit protein uL14 (Levilactobacillus brevis (strain ATCC 367 / BCRC 12310 / CIP 105137 / JCM 1170 / LMG 11437 / NCIMB 947 / NCTC 947) (Lactobacillus brevis)).